A 2214-amino-acid chain; its full sequence is Non-reducing polyketide synthase dpmpA (2214 aa).

The segment at glutamate 75–aspartate 178 is N-terminal acylcarrier protein transacylase domain (SAT). The region spanning aspartate 372–glutamine 784 is the Ketosynthase family 3 (KS3) domain. Residues cysteine 532, histidine 667, and histidine 707 each act as for beta-ketoacyl synthase activity in the active site. The tract at residues valine 888–proline 1184 is malonyl-CoA:ACP transacylase (MAT) domain. The active-site For acyl/malonyl transferase activity is serine 974. Residues proline 1255–arginine 1389 form an N-terminal hotdog fold region. Positions proline 1255–glutamine 1566 constitute a PKS/mFAS DH domain. A product template (PT) domain region spans residues glycine 1265–valine 1560. Positions glycine 1416 to glutamine 1566 are C-terminal hotdog fold. Carrier domains are found at residues asparagine 1620 to leucine 1695 and lysine 1722 to aspartate 1802. Serine 1654 is subject to O-(pantetheine 4'-phosphoryl)serine. The segment at valine 1698 to glutamine 1728 is disordered. Polar residues predominate over residues aspartate 1711–glutamine 1726. Serine 1762 is modified (O-(pantetheine 4'-phosphoryl)serine). The interval glycine 1805–lysine 1827 is disordered. The span at serine 1810–lysine 1827 shows a compositional bias: basic and acidic residues. The tract at residues phenylalanine 1958 to isoleucine 2210 is methyltransferase (CMeT) domain.

It participates in secondary metabolite biosynthesis; terpenoid biosynthesis. Its function is as follows. Non-reducing polyketide synthase; part of the gene cluster that mediates the biosynthesis of diterpenoid pyrones. The first step of the pathway is the synthesis of the alpha-pyrone moiety by the polyketide synthase dpmpA via condensation of one acetyl-CoA starter unit with 3 malonyl-CoA units and 2 methylations. The alpha-pyrone is then combined with geranylgeranyl pyrophosphate (GGPP) formed by the GGPP synthase dpmpD through the action of the prenyltransferase dpmpC to yield a linear alpha-pyrone diterpenoid. Subsequent steps in the diterpenoid pyrone biosynthetic pathway involve the decalin core formation, which is initiated by the epoxidation of the C10-C11 olefin by the FAD-dependent oxidoreductase dpmpE, and is followed by a cyclization cascade catalyzed by the terpene cyclase dpmpB. The short chain dehydrogenase/reductase dpmpG then oxidizes the 8S hydroxy group to a ketone and the short chain dehydrogenase/reductase dpmpH reduces the ketone to the 8R hydroxy group to yield higginsianin B. Higginsianin B is further methylated by the methyltransferase dpmpI to produce the intermediate named FDDP B. The cytochrome P450 monooxygenase dpmpJ then oxidizes the C-26 methyl to primary alcohol, producing the final diterpenoid pyrone with a C-26 primary alcohol on the gamma-pyrone moiety named FDDP C. The polypeptide is Non-reducing polyketide synthase dpmpA (Macrophomina phaseolina (strain MS6) (Charcoal rot fungus)).